Consider the following 1274-residue polypeptide: Vacuolar protein sorting-associated protein 8 (1274 aa).

Position 1 is an N-acetylmethionine (Met-1). WD repeat units follow at residues 75 to 119, 131 to 170, and 193 to 233; these read THVY…QTIL, SIRS…RVKP, and HVNK…FWQL. CHCR repeat units follow at residues 507 to 665 and 915 to 1092; these read LQQS…YPQN and FDLL…KYPS. An RING-type; atypical zinc finger spans residues 1198-1266; sequence CEICGKKIWG…PDEYSCLICQ (69 aa).

It belongs to the VPS8 family.

It localises to the golgi apparatus. The protein resides in the golgi stack. Functionally, required for localization and recycling of the CPY sorting receptor (VPS10) to the late-Golgi compartment. Involved in the retention of proteins to the late-Golgi. Plays an integral role in the complex vacuolar protein sorting process. This chain is Vacuolar protein sorting-associated protein 8 (VPS8), found in Saccharomyces cerevisiae (strain ATCC 204508 / S288c) (Baker's yeast).